Consider the following 347-residue polypeptide: GMP reductase (347 aa).

108 to 131 (ADFEKTKQILDLNPALNFVCIDVA) lines the NADP(+) pocket. 2 residues coordinate K(+): Gly181 and Gly183. Catalysis depends on Cys186, which acts as the Thioimidate intermediate. 216–239 (IVSDGGCTTPGDVAKAFGGGADFV) is a binding site for NADP(+).

This sequence belongs to the IMPDH/GMPR family. GuaC type 1 subfamily. Homotetramer.

It carries out the reaction IMP + NH4(+) + NADP(+) = GMP + NADPH + 2 H(+). Its function is as follows. Catalyzes the irreversible NADPH-dependent deamination of GMP to IMP. It functions in the conversion of nucleobase, nucleoside and nucleotide derivatives of G to A nucleotides, and in maintaining the intracellular balance of A and G nucleotides. This is GMP reductase from Shigella dysenteriae serotype 1 (strain Sd197).